A 110-amino-acid polypeptide reads, in one-letter code: Toxin HigB-2 (110 aa).

Toxic component of a type II toxin-antitoxin (TA) system. Inhibits translation by cleavage of mRNA. The polypeptide is Toxin HigB-2 (higB-2) (Vibrio cholerae serotype O1 (strain ATCC 39315 / El Tor Inaba N16961)).